Reading from the N-terminus, the 863-residue chain is Leucine--tRNA ligase (863 aa).

The 'HIGH' region motif lies at 42-53 (PYPSGSGLHVGH). Residues 635–639 (KMSKS) carry the 'KMSKS' region motif. An ATP-binding site is contributed by Lys638.

This sequence belongs to the class-I aminoacyl-tRNA synthetase family.

It localises to the cytoplasm. It carries out the reaction tRNA(Leu) + L-leucine + ATP = L-leucyl-tRNA(Leu) + AMP + diphosphate. The polypeptide is Leucine--tRNA ligase (Salinibacter ruber (strain DSM 13855 / M31)).